We begin with the raw amino-acid sequence, 88 residues long: UPF0297 protein BPUM_2379 (88 aa).

Belongs to the UPF0297 family.

This chain is UPF0297 protein BPUM_2379, found in Bacillus pumilus (strain SAFR-032).